A 673-amino-acid chain; its full sequence is Ion-translocating oxidoreductase complex subunit C (673 aa).

4Fe-4S ferredoxin-type domains follow at residues 368 to 397 (MGAP…QQLY) and 407 to 436 (KATA…VQYF). The [4Fe-4S] cluster site is built by cysteine 377, cysteine 380, cysteine 383, cysteine 387, cysteine 416, cysteine 419, cysteine 422, and cysteine 426. Residues 529-554 (EARKAQARAKQAGHPMADSATSGDDP) form a disordered region.

The protein belongs to the 4Fe4S bacterial-type ferredoxin family. RnfC subfamily. As to quaternary structure, the complex is composed of six subunits: RsxA, RsxB, RsxC, RsxD, RsxE and RsxG. [4Fe-4S] cluster serves as cofactor.

It is found in the cell inner membrane. Functionally, part of a membrane-bound complex that couples electron transfer with translocation of ions across the membrane. Required to maintain the reduced state of SoxR. The polypeptide is Ion-translocating oxidoreductase complex subunit C (Salmonella arizonae (strain ATCC BAA-731 / CDC346-86 / RSK2980)).